Consider the following 532-residue polypeptide: Autoinducer-2 kinase (532 aa).

This sequence belongs to the FGGY kinase family.

The protein localises to the cytoplasm. The enzyme catalyses (S)-4,5-dihydroxypentane-2,3-dione + ATP = (2S)-2-hydroxy-3,4-dioxopentyl phosphate + ADP + H(+). Functionally, catalyzes the phosphorylation of autoinducer-2 (AI-2) to phospho-AI-2, which subsequently inactivates the transcriptional regulator LsrR and leads to the transcription of the lsr operon. Phosphorylates the ring-open form of (S)-4,5-dihydroxypentane-2,3-dione (DPD), which is the precursor to all AI-2 signaling molecules, at the C5 position. The polypeptide is Autoinducer-2 kinase (Klebsiella pneumoniae subsp. pneumoniae (strain ATCC 700721 / MGH 78578)).